The sequence spans 926 residues: Vacuolar protein sorting-associated protein 39 homolog (926 aa).

Residues 15 to 306 enclose the CNH domain; it reads PVEVTCLAFQ…MTLCSGARGQ (292 aa). One copy of the CHCR repeat lies at 590-768; sequence DETEMARNLN…LFRTLVHPNQ (179 aa).

Belongs to the VAM6/VPS39 family. As to quaternary structure, probable core component of the homotypic fusion and vacuole protein sorting (HOPS) complex consisting of the core class C Vps proteins vps-11, vps-16, vps-18, and which further associates with vps-33.1, vps-39 and vps-41. May interact with lgg-2. Interacts with cuti-1.

It is found in the cytoplasm. The protein localises to the lysosome membrane. It localises to the late endosome membrane. Its subcellular location is the late endosome. The protein resides in the lysosome. Functionally, plays a role in vesicle-mediated protein trafficking to lysosomal compartments including the endocytic membrane transport and autophagic pathways. Believed to act in part as a component of the putative HOPS endosomal tethering complex which is proposed to be involved in the rab-5-to-rab-7 endosome conversion probably implicating sand-1, and via binding SNAREs and SNARE complexes to mediate tethering and docking events during SNARE-mediated membrane fusion. The HOPS complex is proposed to be recruited to rab-7 on the late endosomal membrane and to regulate late endocytic, phagocytic and autophagic traffic towards lysosomes. Involved in homotypic vesicle fusions between late endosomes and in heterotypic fusions between late endosomes and lysosomes. Required for fusion of endosomes. In association with lgg-2 mediates the tethering of autophagosomes with lysosomes to form autolysosomes. Within the HOPS complex, contributes to the normal development of gut granules in embryonic and adult intestinal cells. The protein is Vacuolar protein sorting-associated protein 39 homolog of Caenorhabditis elegans.